A 105-amino-acid polypeptide reads, in one-letter code: Large ribosomal subunit protein uL24 (105 aa).

Belongs to the universal ribosomal protein uL24 family. In terms of assembly, part of the 50S ribosomal subunit.

Functionally, one of two assembly initiator proteins, it binds directly to the 5'-end of the 23S rRNA, where it nucleates assembly of the 50S subunit. In terms of biological role, one of the proteins that surrounds the polypeptide exit tunnel on the outside of the subunit. This chain is Large ribosomal subunit protein uL24, found in Psychrobacter cryohalolentis (strain ATCC BAA-1226 / DSM 17306 / VKM B-2378 / K5).